Here is a 648-residue protein sequence, read N- to C-terminus: Threonine--tRNA ligase (648 aa).

One can recognise a TGS domain in the interval M1–T61. Residues D242–P540 are catalytic. Zn(2+) contacts are provided by C336, H387, and H517.

This sequence belongs to the class-II aminoacyl-tRNA synthetase family. In terms of assembly, homodimer. Zn(2+) serves as cofactor.

The protein localises to the cytoplasm. It carries out the reaction tRNA(Thr) + L-threonine + ATP = L-threonyl-tRNA(Thr) + AMP + diphosphate + H(+). Its function is as follows. Catalyzes the attachment of threonine to tRNA(Thr) in a two-step reaction: L-threonine is first activated by ATP to form Thr-AMP and then transferred to the acceptor end of tRNA(Thr). Also edits incorrectly charged L-seryl-tRNA(Thr). This chain is Threonine--tRNA ligase, found in Streptococcus equi subsp. zooepidemicus (strain H70).